Consider the following 113-residue polypeptide: Tyrosine-protein phosphatase 15 (113 aa).

A Tyrosine-protein phosphatase domain is found at 1 to 113; that stretch reads WRMVYDNNVN…RSTGDGVALI (113 aa).

This sequence belongs to the protein-tyrosine phosphatase family.

The enzyme catalyses O-phospho-L-tyrosyl-[protein] + H2O = L-tyrosyl-[protein] + phosphate. This Styela plicata (Wrinkled sea squirt) protein is Tyrosine-protein phosphatase 15 (STY-15).